The chain runs to 164 residues: Peptidyl-prolyl cis-trans isomerase A (164 aa).

Met-1 carries the post-translational modification N-acetylmethionine. Val-2 is modified (N-acetylvaline; in Peptidyl-prolyl cis-trans isomerase A, N-terminally processed). Positions 7-163 (FFDIAVDGEP…KKITIADCGQ (157 aa)) constitute a PPIase cyclophilin-type domain. Lys-28 carries the post-translational modification N6-acetyllysine; alternate. A Glycyl lysine isopeptide (Lys-Gly) (interchain with G-Cter in SUMO2); alternate cross-link involves residue Lys-28. Residue Lys-28 forms a Glycyl lysine isopeptide (Lys-Gly) (interchain with G-Cter in ubiquitin); alternate linkage. N6-acetyllysine is present on residues Lys-44 and Lys-76. Position 77 is a phosphoserine (Ser-77). Lys-82 is subject to N6-acetyllysine; alternate. Residue Lys-82 forms a Glycyl lysine isopeptide (Lys-Gly) (interchain with G-Cter in SUMO2); alternate linkage. Thr-93 is subject to Phosphothreonine. Asn-108 is a glycosylation site (N-linked (GlcNAc...) asparagine). Lys-125, Lys-131, and Lys-133 each carry N6-acetyllysine.

It belongs to the cyclophilin-type PPIase family. PPIase A subfamily. In terms of assembly, interacts with protein phosphatase PPP3CA/calcineurin A. Interacts with isoform 2 of BSG/CD147. Interacts with FOXO1; the interaction promotes FOXO1 dephosphorylation, nuclear accumulation and transcriptional activity. Interacts with integrin ITGA2B:ITGB3; the interaction is ROS and peptidyl-prolyl cis-trans isomerase (PPIase) activity-dependent and is increased in the presence of thrombin. Interacts with MAP3K5. Interacts with TARDBP; the interaction is dependent on the RNA-binding activity of TARDBP and the PPIase activity of PPIA/CYPA and the acetylation of PPIA/CYPA at Lys-125 favors the interaction. Interacts with HNRNPA1, HNRNPA2B1, HNRNPC, RBMX, HNRNPK and HNRNPM. Acetylation at Lys-125 markedly inhibits catalysis of cis to trans isomerization. PPIA acetylation also antagonizes the immunosuppressive effects of cyclosporine by inhibiting the sequential steps of cyclosporine binding and calcineurin inhibition. Acetylation at Lys-125 favors the interaction with TARDBP.

It is found in the cytoplasm. The protein resides in the secreted. It localises to the nucleus. The catalysed reaction is [protein]-peptidylproline (omega=180) = [protein]-peptidylproline (omega=0). Binds cyclosporin A (CsA). CsA mediates some of its effects via an inhibitory action on PPIase. Catalyzes the cis-trans isomerization of proline imidic peptide bonds in oligopeptides. Exerts a strong chemotactic effect on leukocytes partly through activation of one of its membrane receptors BSG/CD147, initiating a signaling cascade that culminates in MAPK/ERK activation. Activates endothelial cells (ECs) in a proinflammatory manner by stimulating activation of NF-kappa-B and ERK, JNK and p38 MAP-kinases and by inducing expression of adhesion molecules including SELE and VCAM1. Induces apoptosis in ECs by promoting the FOXO1-dependent expression of CCL2 and BCL2L11 which are involved in EC chemotaxis and apoptosis. In response to oxidative stress, initiates proapoptotic and antiapoptotic signaling in ECs via activation of NF-kappa-B and AKT1 and up-regulation of antiapoptotic protein BCL2. Negatively regulates MAP3K5/ASK1 kinase activity, autophosphorylation and oxidative stress-induced apoptosis mediated by MAP3K5/ASK1. Necessary for the assembly of TARDBP in heterogeneous nuclear ribonucleoprotein (hnRNP) complexes and regulates TARDBP binding to RNA UG repeats and TARDBP-dependent expression of HDAC6, ATG7 and VCP which are involved in clearance of protein aggregates. Plays an important role in platelet activation and aggregation. Regulates calcium mobilization and integrin ITGA2B:ITGB3 bidirectional signaling via increased ROS production as well as by facilitating the interaction between integrin and the cell cytoskeleton. Binds heparan sulfate glycosaminoglycans. In Saguinus oedipus (Cotton-top tamarin), this protein is Peptidyl-prolyl cis-trans isomerase A (PPIA).